A 255-amino-acid polypeptide reads, in one-letter code: Taurine import ATP-binding protein TauB (255 aa).

Positions 2-229 (LQISHLYADY…RFVAGESSRS (228 aa)) constitute an ABC transporter domain. 34–41 (GPSGCGKT) contacts ATP.

The protein belongs to the ABC transporter superfamily. Taurine importer (TC 3.A.1.17.1) family. In terms of assembly, the complex is composed of two ATP-binding proteins (TauB), two transmembrane proteins (TauC) and a solute-binding protein (TauA).

It is found in the cell inner membrane. The enzyme catalyses taurine(out) + ATP + H2O = taurine(in) + ADP + phosphate + H(+). Its function is as follows. Part of the ABC transporter complex TauABC involved in taurine import. Responsible for energy coupling to the transport system. This chain is Taurine import ATP-binding protein TauB, found in Escherichia coli (strain K12).